We begin with the raw amino-acid sequence, 902 residues long: HTH-type transcriptional regulator MalT (902 aa).

39 to 46 (SPAGYGKT) lines the ATP pocket. An HTH luxR-type domain is found at 832-897 (ELVRTSPLTQ…EAIVTAENLL (66 aa)). Residues 856–875 (NEQIAQELDVAGTTIKTHIR) constitute a DNA-binding region (H-T-H motif).

It belongs to the MalT family. In terms of assembly, monomer in solution. Oligomerizes to an active state in the presence of the positive effectors ATP and maltotriose.

Activated by ATP and maltotriose, which are both required for DNA binding. In terms of biological role, positively regulates the transcription of the maltose regulon whose gene products are responsible for uptake and catabolism of malto-oligosaccharides. Specifically binds to the promoter region of its target genes, recognizing a short DNA motif called the MalT box. This chain is HTH-type transcriptional regulator MalT, found in Vibrio campbellii (strain ATCC BAA-1116).